The following is a 118-amino-acid chain: Holo-[acyl-carrier-protein] synthase (118 aa).

Positions 5 and 50 each coordinate Mg(2+).

Belongs to the P-Pant transferase superfamily. AcpS family. The cofactor is Mg(2+).

The protein localises to the cytoplasm. The catalysed reaction is apo-[ACP] + CoA = holo-[ACP] + adenosine 3',5'-bisphosphate + H(+). Transfers the 4'-phosphopantetheine moiety from coenzyme A to a Ser of acyl-carrier-protein. The protein is Holo-[acyl-carrier-protein] synthase of Aliarcobacter butzleri (strain RM4018) (Arcobacter butzleri).